A 911-amino-acid chain; its full sequence is Anoctamin-6 (911 aa).

Topologically, residues 1–301 are cytoplasmic; it reads MQMMTRKVLL…YGEKIGIYFA (301 aa). The helical transmembrane segment at 302 to 322 threads the bilayer; sequence WLGYYTQMLLLAAVVGVACFL. Topologically, residues 323–376 are extracellular; the sequence is YGYLDQDNCTWSKEVCDPDIGGQILMCPQCDRLCPFWRLNITCESSKKLCIFDS. An N-linked (GlcNAc...) asparagine glycan is attached at asparagine 330. 5 disulfides stabilise this stretch: cysteine 331–cysteine 372, cysteine 338–cysteine 365, cysteine 349–cysteine 807, cysteine 352–cysteine 356, and cysteine 596–cysteine 601. An N-linked (GlcNAc...) asparagine glycan is attached at asparagine 362. A helical membrane pass occupies residues 377 to 397; it reads FGTLIFAVFMGVWVTLFLEFW. Topologically, residues 398–456 are cytoplasmic; that stretch reads KRRQAELEYEWDTVELQQEEQARPEYEAQCNHVVINEITQEEERIPFTTCGKCIRVTLC. The helical transmembrane segment at 457 to 477 threads the bilayer; the sequence is ASAVFFWILLIIASVIGIIVY. Over 478–510 the chain is Extracellular; it reads RLSVFIVFSTTLPKNPNGTDPIQKYLTPQMATS. Asparagine 494 is a glycosylation site (N-linked (GlcNAc...) asparagine). The helical transmembrane segment at 511–531 threads the bilayer; it reads ITASIISFIIIMILNTIYEKV. The Cytoplasmic segment spans residues 532-552; it reads AIMITNFELPRTQTDYENSLT. The chain crosses the membrane as a helical span at residues 553-573; sequence MKMFLFQFVNYYSSCFYIAFF. The Extracellular portion of the chain corresponds to 574 to 602; it reads KGKFVGYPGDPVYLLGKYRSEECDPGGCL. A helical transmembrane segment spans residues 603-622; the sequence is LELTTQLTIIMGGKAIWNNI. Residues 623–664 lie on the Cytoplasmic side of the membrane; that stretch reads QEVLLPWVMNLIGRYKRVSGSEKITPRWEQDYHLQPMGKLGL. Ca(2+)-binding residues include glutamate 624, glutamate 667, and glutamate 670. 2 consecutive transmembrane segments (helical) span residues 665-685 and 686-706; these read FYEYLEMIIQFGFVTLFVASF and PLAPLLALVNNILEIRVDAWK. Over 707–723 the chain is Cytoplasmic; the sequence is LTTQFRRMVPEKAQDIG. A helical membrane pass occupies residues 724 to 744; sequence AWQPIMQGIAILAVVTNAMII. Residues 745–837 lie on the Extracellular side of the membrane; the sequence is AFTSDMIPRL…YWHVIAAKLA (93 aa). Residues asparagine 778, asparagine 785, and asparagine 803 are each glycosylated (N-linked (GlcNAc...) asparagine). A helical membrane pass occupies residues 838–858; sequence FIIVMEHIIYSVKFFISYAIP. Residues 859–911 lie on the Cytoplasmic side of the membrane; sequence DVSKITKSKIKREKYLTQKLLHESHLKDLTKNMGIIAERIGGTVDNSVRPKLE.

Belongs to the anoctamin family. In terms of assembly, homodimer. In terms of tissue distribution, predominant expression seen in epithelial tissues. Also found in skeletal system where it is primarily expressed in osteoblasts.

It is found in the cell membrane. The catalysed reaction is a 1,2-diacyl-sn-glycero-3-phospho-L-serine(in) = a 1,2-diacyl-sn-glycero-3-phospho-L-serine(out). It carries out the reaction a beta-D-galactosyl-(1&lt;-&gt;1')-N-acylsphing-4-enine(out) = a beta-D-galactosyl-(1&lt;-&gt;1')-N-acylsphing-4-enine(in). It catalyses the reaction a 1,2-diacyl-sn-glycero-3-phosphocholine(in) = a 1,2-diacyl-sn-glycero-3-phosphocholine(out). With respect to regulation, exhibits synergistic gating by Ca(2+) and voltage. Inhibited by some non-specific cation channel blockers such as: ruthenium red, 2-aminoethyl diphenylborinate (2APB), gadolinium and cadmium ions. Small-conductance calcium-activated nonselective cation (SCAN) channel which acts as a regulator of phospholipid scrambling in platelets, osteoblasts and fetal thymocytes. Phospholipid scrambling results in surface exposure of phosphatidylserine which in platelets is essential to trigger the clotting system whereas in osteoblasts is essential for the deposition of hydroxyapatite during bone mineralization. Has calcium-dependent phospholipid scramblase activity; scrambles phosphatidylserine, phosphatidylcholine and galactosylceramide. Can generate outwardly rectifying chloride channel currents in airway epithelial cells and Jurkat T lymphocytes. This Mus musculus (Mouse) protein is Anoctamin-6 (Ano6).